Reading from the N-terminus, the 121-residue chain is UPF0212 protein VNG_0879C (121 aa).

It belongs to the UPF0212 family.

The protein is UPF0212 protein VNG_0879C of Halobacterium salinarum (strain ATCC 700922 / JCM 11081 / NRC-1) (Halobacterium halobium).